We begin with the raw amino-acid sequence, 179 residues long: MKTISKQLSAVIFPFIFSACVSQSASSLNHQTAAKARVELALSYLQQNNPQLAKINLDKALQHDKNYYLVHSALAHYYQQQGQIENAFREYEIAVNLNHKQGDVHNNFGTFLCSQKKFEQAQQQFELALNSPNYYHQADTFENIVLCAYSAQKMDIYQQTLEKLRQIDGKRAEKFNSLK.

Residues 1–27 (MKTISKQLSAVIFPFIFSACVSQSASS) constitute a signal peptide (or 24).

This is an uncharacterized protein from Haemophilus influenzae (strain ATCC 51907 / DSM 11121 / KW20 / Rd).